An 814-amino-acid chain; its full sequence is Acyl-coenzyme A dehydrogenase (814 aa).

E497 (proton acceptor) is an active-site residue.

This sequence belongs to the acyl-CoA dehydrogenase family. It depends on FAD as a cofactor.

The enzyme catalyses a medium-chain 2,3-saturated fatty acyl-CoA + oxidized [electron-transfer flavoprotein] + H(+) = a medium-chain (2E)-enoyl-CoA + reduced [electron-transfer flavoprotein]. The catalysed reaction is a long-chain 2,3-saturated fatty acyl-CoA + oxidized [electron-transfer flavoprotein] + H(+) = a long-chain (2E)-enoyl-CoA + reduced [electron-transfer flavoprotein]. It functions in the pathway lipid metabolism; fatty acid beta-oxidation. Catalyzes the dehydrogenation of acyl-coenzymes A (acyl-CoAs) to 2-enoyl-CoAs, the first step of the beta-oxidation cycle of fatty acid degradation. Is required for S.typhimurium to utilize medium- and long-chain fatty acids as sole carbon sources for growth. Is needed for bacterial survival during carbone-source starvation. The sequence is that of Acyl-coenzyme A dehydrogenase (fadE) from Salmonella typhimurium (strain LT2 / SGSC1412 / ATCC 700720).